The primary structure comprises 1512 residues: DNA polymerase (1512 aa).

This sequence belongs to the DNA polymerase type-B family.

Its subcellular location is the host nucleus. The catalysed reaction is DNA(n) + a 2'-deoxyribonucleoside 5'-triphosphate = DNA(n+1) + diphosphate. The polypeptide is DNA polymerase (57/58) (Ictalurid herpesvirus 1 (strain Auburn) (IcHV-1)).